The following is an 84-amino-acid chain: U4-theraphotoxin-Hhn1a (84 aa).

The N-terminal stretch at 1–22 (MKVTLIAILTCAAVLVLHTTAA) is a signal peptide. A propeptide spanning residues 23–47 (EELEESQLMEVGMPDTELEAVDEER) is cleaved from the precursor. 3 cysteine pairs are disulfide-bonded: cysteine 51–cysteine 65, cysteine 55–cysteine 76, and cysteine 70–cysteine 81.

The protein belongs to the neurotoxin 12 (Hwtx-2) family. 02 (Hwtx-2) subfamily. As to expression, expressed by the venom gland.

It localises to the secreted. Functionally, postsynaptic neurotoxin. The protein is U4-theraphotoxin-Hhn1a of Cyriopagopus hainanus (Chinese bird spider).